A 225-amino-acid chain; its full sequence is UPF0758 protein NGK_1225 (225 aa).

One can recognise an MPN domain in the interval Thr-102–Met-224. Residues His-173, His-175, and Asp-186 each contribute to the Zn(2+) site. Residues His-173 to Asp-186 carry the JAMM motif motif.

It belongs to the UPF0758 family.

The sequence is that of UPF0758 protein NGK_1225 from Neisseria gonorrhoeae (strain NCCP11945).